We begin with the raw amino-acid sequence, 226 residues long: Peroxiredoxin-like 2C (226 aa).

This sequence belongs to the peroxiredoxin-like PRXL2 family. PRXL2C subfamily. In terms of tissue distribution, expressed in gastric tissues.

Its function is as follows. May positively regulate ERK1/2 signaling and AKT1 activation leading to HIF1A up-regulation with an increased expression of glycolysis genes and enhanced glycolysis. The polypeptide is Peroxiredoxin-like 2C (Homo sapiens (Human)).